The sequence spans 438 residues: UDP-N-acetylmuramate--L-alanine ligase (438 aa).

Position 108 to 114 (108 to 114 (GAHGKTS)) interacts with ATP.

The protein belongs to the MurCDEF family.

It localises to the cytoplasm. The enzyme catalyses UDP-N-acetyl-alpha-D-muramate + L-alanine + ATP = UDP-N-acetyl-alpha-D-muramoyl-L-alanine + ADP + phosphate + H(+). Its pathway is cell wall biogenesis; peptidoglycan biosynthesis. Cell wall formation. In Oceanobacillus iheyensis (strain DSM 14371 / CIP 107618 / JCM 11309 / KCTC 3954 / HTE831), this protein is UDP-N-acetylmuramate--L-alanine ligase.